The following is a 187-amino-acid chain: Biphenyl 2,3-dioxygenase subunit beta (187 aa).

Belongs to the bacterial ring-hydroxylating dioxygenase beta subunit family. Heterohexamer consisting of three BphA1 subunits and three BphA2 subunits. The multicomponent biphenyl dioxygenase system is composed of a ferredoxin reductase (BphA4), a ferredoxin (BphA3), and a terminal oxygenase (BphA1A2).

It catalyses the reaction biphenyl + NADH + O2 + H(+) = (2R,3S)-3-phenylcyclohexa-3,5-diene-1,2-diol + NAD(+). It participates in xenobiotic degradation; biphenyl degradation; 2-hydroxy-2,4-pentadienoate and benzoate from biphenyl: step 1/4. Its function is as follows. Part of the oxygenase component of the biphenyl dioxygenase system that catalyzes the stereospecific dihydroxylation of the aromatic ring of biphenyl, yielding a dihydrodiol compound. Is likely involved in biphenyl degradation that allows growth of Rhodococcus sp. strain RHA1 on biphenyl as the sole source of carbon and energy. Can also use naphtalene and 4-chlorobiphenyl (4-CB) as substrates, as well as some polychlorinated biphenyls (PCB) such as 2,2'-dichlorobiphenyl, 2,3-dichlorobiphenyl and 2,5,2'-trichlorobiphenyl. Exhibits weak activity toward dibenzofuran and dibenzo-p-dioxin. Electrons are transferred from NADH to the [2Fe-2S] cluster in BphA1 via FAD of BphA4 and [2Fe-2S] cluster of BphA3. This is Biphenyl 2,3-dioxygenase subunit beta from Rhodococcus jostii (strain RHA1).